A 323-amino-acid polypeptide reads, in one-letter code: MDRQSAVAQLRAAAEQFARVHLDACDRWSVGLSGGPDSLALTAVAARLWPTTALIVDHGLQPGSATVAETARIQAISLGCVDARVLCVQVGAAGGREAAARSARYSALEEHRDGPVLLAHTLDDQAETVLLGLGRGSGARSIAGMRPYDPPWCRPLLGVRRSVTHAACRELGLTAWQDPHNTDRRFTRTRLRTEVLPLLEDVLGGGVAEALARTATALREDTDLIDTIAAQALPGAAVAGSRGQELSTSALTALPDAVRRRVIRGWLLAGGATGLTDRQIRGVDRLVTAWRGQGGVAVGSTLRGQRLVAGRRDGVLVLRREPV.

Position 33-38 (33-38 (SGGPDS)) interacts with ATP.

It belongs to the tRNA(Ile)-lysidine synthase family.

The protein resides in the cytoplasm. The catalysed reaction is cytidine(34) in tRNA(Ile2) + L-lysine + ATP = lysidine(34) in tRNA(Ile2) + AMP + diphosphate + H(+). Its function is as follows. Ligates lysine onto the cytidine present at position 34 of the AUA codon-specific tRNA(Ile) that contains the anticodon CAU, in an ATP-dependent manner. Cytidine is converted to lysidine, thus changing the amino acid specificity of the tRNA from methionine to isoleucine. The chain is tRNA(Ile)-lysidine synthase from Mycobacterium bovis (strain ATCC BAA-935 / AF2122/97).